The following is a 636-amino-acid chain: p-hydroxybenzoate-m-hydroxylase A (636 aa).

FAD-binding positions include 10 to 39, 241 to 243, Tyr289, and Asp310; these read DIVI…HIDN and RLY. Residues 11–28 traverse the membrane as a helical segment; it reads IVIVGAGPVGIVLSLCMS.

The protein belongs to the PheA/TfdB FAD monooxygenase family. FAD serves as cofactor.

It is found in the membrane. The enzyme catalyses 4-hydroxybenzoate + NADH + O2 + H(+) = 3,4-dihydroxybenzoate + NAD(+) + H2O. It catalyses the reaction 4-hydroxybenzoate + NADPH + O2 + H(+) = 3,4-dihydroxybenzoate + NADP(+) + H2O. In terms of biological role, FAD-dependent monooxygenase; part of the benzoic acid degradation pathway also known as the protocatechuic acid pathway. Benzoic acid debradation begins with the conversion of benzoic acid into 4-hydroxybenzoic acid through hydroxylation by the benzoate-4-monooxygenase bphA, and its partner NADPH-cytochrome P450 reductase cprA which act as a mediator in electron donation from NADPH. 4-Hydroxybenzoic acid is then converted into 3,4-dihydroxybenzoic acid (also called protocatechuic acid) by the p-hydroxybenzoate-m-hydroxylase phhA. Protocatechuic acid is converted into 3-carboxy-cis,cis-muconic acid by the intradiol ring-cleavage dioxygenase prcA, which is further metabolized through the 3-oxoadipate pathway to finally enter the tricarboxylic acid cycle (TCA). In Aspergillus niger (strain ATCC MYA-4892 / CBS 513.88 / FGSC A1513), this protein is p-hydroxybenzoate-m-hydroxylase A.